Here is a 429-residue protein sequence, read N- to C-terminus: GTPase Obg (429 aa).

One can recognise an Obg domain in the interval 1–158; sequence MFVDQVKIYV…RNVQLELKVL (158 aa). The segment at 124–145 is disordered; sequence RGNKRFATPANPAPELSENGEP. The OBG-type G domain occupies 159–329; the sequence is ADVGLVGFPS…LLLAIADKLE (171 aa). GTP contacts are provided by residues 165–172, 190–194, 212–215, 282–285, and 310–312; these read GFPSVGKS, FTTIV, DLPG, NKMD, and SAV. Mg(2+)-binding residues include Ser-172 and Thr-192. Residues 351-429 enclose the OCT domain; that stretch reads KYIAEEPDFE…LLDYEFEFMD (79 aa).

Belongs to the TRAFAC class OBG-HflX-like GTPase superfamily. OBG GTPase family. In terms of assembly, monomer. Mg(2+) is required as a cofactor.

It is found in the cytoplasm. Its function is as follows. An essential GTPase which binds GTP, GDP and possibly (p)ppGpp with moderate affinity, with high nucleotide exchange rates and a fairly low GTP hydrolysis rate. Plays a role in control of the cell cycle, stress response, ribosome biogenesis and in those bacteria that undergo differentiation, in morphogenesis control. The sequence is that of GTPase Obg from Listeria welshimeri serovar 6b (strain ATCC 35897 / DSM 20650 / CCUG 15529 / CIP 8149 / NCTC 11857 / SLCC 5334 / V8).